A 335-amino-acid polypeptide reads, in one-letter code: Cytoskeleton protein RodZ (335 aa).

Residues Met-1–Gly-111 are Cytoplasmic-facing. In terms of domain architecture, HTH cro/C1-type spans Leu-19–Leu-71. A DNA-binding region (H-T-H motif) is located at residues Gln-30–Glu-49. The helical; Signal-anchor for type II membrane protein transmembrane segment at Trp-112–Trp-132 threads the bilayer. Over Trp-133–Gln-335 the chain is Periplasmic. Over residues Asp-148–Leu-164 the composition is skewed to polar residues. The disordered stretch occupies residues Asp-148–Thr-244. Composition is skewed to low complexity over residues Asp-165–Gln-205 and Asp-217–Asp-239.

Belongs to the RodZ family.

The protein resides in the cell inner membrane. Its function is as follows. Cytoskeletal protein that is involved in cell-shape control through regulation of the length of the long axis. This Escherichia coli O81 (strain ED1a) protein is Cytoskeleton protein RodZ.